Consider the following 207-residue polypeptide: Large ribosomal subunit protein uL4 (207 aa).

The disordered stretch occupies residues 49 to 78 (HAVKNRSAVSGGGRKPWRQKGTGRARQGSI).

Belongs to the universal ribosomal protein uL4 family. As to quaternary structure, part of the 50S ribosomal subunit.

Functionally, one of the primary rRNA binding proteins, this protein initially binds near the 5'-end of the 23S rRNA. It is important during the early stages of 50S assembly. It makes multiple contacts with different domains of the 23S rRNA in the assembled 50S subunit and ribosome. Forms part of the polypeptide exit tunnel. In Streptococcus uberis (strain ATCC BAA-854 / 0140J), this protein is Large ribosomal subunit protein uL4.